Here is a 705-residue protein sequence, read N- to C-terminus: Glycogen [starch] synthase isoform 2 (705 aa).

R20 serves as a coordination point for UDP. S159 carries the post-translational modification Phosphoserine. UDP-alpha-D-glucose contacts are provided by H193 and R199. 5 residues coordinate alpha-D-glucose 6-phosphate: H280, E281, Q283, H286, and K290. Position 320 (R320) interacts with UDP. R320 contacts UDP-alpha-D-glucose. A phosphoserine mark is found at S363 and S467. Alpha-D-glucose 6-phosphate is bound at residue H500. Residues E509, W511, and G512 each contribute to the UDP-alpha-D-glucose site. T514 provides a ligand contact to UDP. Alpha-D-glucose 6-phosphate contacts are provided by R583 and R587. S651 is subject to Phosphoserine. Phosphoserine; by PHO85 is present on S655. Phosphoserine; by PKA is present on residues S661 and S663. T668 carries the post-translational modification Phosphothreonine; by PHO85. The disordered stretch occupies residues S686–S705. Acidic residues predominate over residues A693–S705.

Belongs to the glycosyltransferase 3 family. As to quaternary structure, interacts with PCL10. Phosphorylated by the cyclin-CDK PCL10-PHO85. Phosphorylation causes inactivation of enzyme.

It is found in the cytoplasm. The protein localises to the cytosol. It catalyses the reaction [(1-&gt;4)-alpha-D-glucosyl](n) + UDP-alpha-D-glucose = [(1-&gt;4)-alpha-D-glucosyl](n+1) + UDP + H(+). The protein operates within glycan biosynthesis; glycogen biosynthesis. With respect to regulation, allosteric activation by glucose-6-phosphate, and phosphorylation by a cAMP-dependent kinase. Glycogen synthase participates in the glycogen biosynthetic process along with glycogenin and glycogen branching enzyme. Extends the primer composed of a few glucose units formed by glycogenin by adding new glucose units to it. In this context, glycogen synthase transfers the glycosyl residue from UDP-Glc to the non-reducing end of alpha-1,4-glucan. The sequence is that of Glycogen [starch] synthase isoform 2 (GSY2) from Saccharomyces cerevisiae (strain ATCC 204508 / S288c) (Baker's yeast).